Here is a 160-residue protein sequence, read N- to C-terminus: Serine-protein kinase RsbW (160 aa).

This sequence belongs to the anti-sigma-factor family.

The catalysed reaction is L-seryl-[protein] + ATP = O-phospho-L-seryl-[protein] + ADP + H(+). It catalyses the reaction L-threonyl-[protein] + ATP = O-phospho-L-threonyl-[protein] + ADP + H(+). Functionally, negative regulator of sigma-B activity. Phosphorylates and inactivates its specific antagonist protein, RsbV. Upon phosphorylation of RsbV, RsbW is released and binds to sigma-B, thereby blocking its ability to form an RNA polymerase holoenzyme (E-sigma-B). The polypeptide is Serine-protein kinase RsbW (Bacillus cereus (strain Q1)).